The primary structure comprises 141 residues: Cystatin-SN (141 aa).

The N-terminal stretch at 1 to 20 (MAQYLSTLLLLLATLAVALA) is a signal peptide. The Secondary area of contact signature appears at 76–80 (QTVGG). Cystine bridges form between Cys-94-Cys-104 and Cys-118-Cys-138.

The protein belongs to the cystatin family. As to expression, expressed in submandibular and sublingual saliva but not in parotid saliva (at protein level). Expressed in saliva, tears, urine and seminal fluid.

The protein localises to the secreted. Human saliva appears to contain several cysteine proteinase inhibitors that are immunologically related to cystatin S but that differ in their specificity due to amino acid sequence differences. Cystatin SN, with a pI of 7.5, is a much better inhibitor of papain and dipeptidyl peptidase I than is cystatin S, although both inhibit ficin equally well. The protein is Cystatin-SN (CST1) of Homo sapiens (Human).